The primary structure comprises 235 residues: Phosphoribosylaminoimidazole-succinocarboxamide synthase (235 aa).

It belongs to the SAICAR synthetase family.

It carries out the reaction 5-amino-1-(5-phospho-D-ribosyl)imidazole-4-carboxylate + L-aspartate + ATP = (2S)-2-[5-amino-1-(5-phospho-beta-D-ribosyl)imidazole-4-carboxamido]succinate + ADP + phosphate + 2 H(+). It functions in the pathway purine metabolism; IMP biosynthesis via de novo pathway; 5-amino-1-(5-phospho-D-ribosyl)imidazole-4-carboxamide from 5-amino-1-(5-phospho-D-ribosyl)imidazole-4-carboxylate: step 1/2. The sequence is that of Phosphoribosylaminoimidazole-succinocarboxamide synthase from Streptococcus pneumoniae serotype 19F (strain G54).